A 653-amino-acid chain; its full sequence is Asparagine--tRNA ligase, cytoplasmic (653 aa).

It belongs to the class-II aminoacyl-tRNA synthetase family.

The protein resides in the cytoplasm. It catalyses the reaction tRNA(Asn) + L-asparagine + ATP = L-asparaginyl-tRNA(Asn) + AMP + diphosphate + H(+). This Dictyostelium discoideum (Social amoeba) protein is Asparagine--tRNA ligase, cytoplasmic (asnS1).